A 736-amino-acid chain; its full sequence is Phosphoribosylformylglycinamidine synthase subunit PurL (736 aa).

H48 is an active-site residue. Residues Y51 and K90 each contribute to the ATP site. E92 lines the Mg(2+) pocket. Residues 93–96 and R115 each bind substrate; that span reads SHNH. H94 acts as the Proton acceptor in catalysis. D116 is a binding site for Mg(2+). Q239 contributes to the substrate binding site. A Mg(2+)-binding site is contributed by D267. 311-313 lines the substrate pocket; the sequence is ESQ. D492 and G529 together coordinate ATP. N530 contributes to the Mg(2+) binding site. S532 provides a ligand contact to substrate.

This sequence belongs to the FGAMS family. Monomer. Part of the FGAM synthase complex composed of 1 PurL, 1 PurQ and 2 PurS subunits.

It is found in the cytoplasm. It catalyses the reaction N(2)-formyl-N(1)-(5-phospho-beta-D-ribosyl)glycinamide + L-glutamine + ATP + H2O = 2-formamido-N(1)-(5-O-phospho-beta-D-ribosyl)acetamidine + L-glutamate + ADP + phosphate + H(+). It participates in purine metabolism; IMP biosynthesis via de novo pathway; 5-amino-1-(5-phospho-D-ribosyl)imidazole from N(2)-formyl-N(1)-(5-phospho-D-ribosyl)glycinamide: step 1/2. Part of the phosphoribosylformylglycinamidine synthase complex involved in the purines biosynthetic pathway. Catalyzes the ATP-dependent conversion of formylglycinamide ribonucleotide (FGAR) and glutamine to yield formylglycinamidine ribonucleotide (FGAM) and glutamate. The FGAM synthase complex is composed of three subunits. PurQ produces an ammonia molecule by converting glutamine to glutamate. PurL transfers the ammonia molecule to FGAR to form FGAM in an ATP-dependent manner. PurS interacts with PurQ and PurL and is thought to assist in the transfer of the ammonia molecule from PurQ to PurL. In Bradyrhizobium sp. (strain ORS 278), this protein is Phosphoribosylformylglycinamidine synthase subunit PurL.